We begin with the raw amino-acid sequence, 1084 residues long: CRISPR-associated endonuclease Cas9 (1084 aa).

The active-site For RuvC-like nuclease domain is Asp-8. 3 residues coordinate Mn(2+): Asp-8, Glu-496, and Glu-500. The 162-residue stretch at 504 to 665 (TEKRAREMDG…MDEEIDARSM (162 aa)) folds into the HNH Cas9-type domain. The active-site Proton acceptor for HNH nuclease domain is the His-573. Residue His-727 participates in Mn(2+) binding.

This sequence belongs to the CRISPR-associated protein Cas9 family. Subtype II-C subfamily. As to quaternary structure, monomer. Binds crRNA and tracrRNA. Mg(2+) serves as cofactor.

Functionally, CRISPR (clustered regularly interspaced short palindromic repeat) is an adaptive immune system that provides protection against mobile genetic elements (viruses, transposable elements and conjugative plasmids). CRISPR clusters contain spacers, sequences complementary to antecedent mobile elements, and target invading nucleic acids. CRISPR clusters are transcribed and processed into CRISPR RNA (crRNA). In type II CRISPR systems correct processing of pre-crRNA requires a trans-encoded small RNA (tracrRNA), endogenous ribonuclease 3 (rnc) and this protein. The tracrRNA serves as a guide for ribonuclease 3-aided processing of pre-crRNA. Subsequently Cas9/crRNA/tracrRNA endonucleolytically cleaves linear or circular dsDNA target complementary to the spacer; Cas9 is inactive in the absence of the 2 guide RNAs (gRNA). Cas9 recognizes the protospacer adjacent motif (PAM) in the CRISPR repeat sequences to help distinguish self versus nonself, as targets within the bacterial CRISPR locus do not have PAMs. PAM recognition is also required for catalytic activity. The polypeptide is CRISPR-associated endonuclease Cas9 (Corynebacterium diphtheriae (strain ATCC 700971 / NCTC 13129 / Biotype gravis)).